The chain runs to 206 residues: Protein Mabiki (206 aa).

Residues 54-77 (FSDQDADFPPLPKRRRLGSSSSSV) are disordered.

Functionally, plays a role in inducing apoptosis and is involved in the repair of head patterning defects in the embryo caused by extra maternal copies of the homeotic gene bicoid. The chain is Protein Mabiki from Drosophila melanogaster (Fruit fly).